A 458-amino-acid polypeptide reads, in one-letter code: uncharacterized protein (458 aa).

A compositionally biased stretch (basic and acidic residues) spans 1–10; it reads MQAEPKKSQA. Positions 1 to 20 are disordered; that stretch reads MQAEPKKSQAEQRAVAEPVS. A TRAM domain is found at 23 to 84; it reads VSLVGEEYEV…ARFLRADAVE (62 aa). Residues C97, C105, C108, and C193 each contribute to the [4Fe-4S] cluster site. 4 residues coordinate S-adenosyl-L-methionine: Q287, Y316, E340, and D384. C411 (nucleophile) is an active-site residue.

It belongs to the class I-like SAM-binding methyltransferase superfamily. RNA M5U methyltransferase family.

This is an uncharacterized protein from Streptomyces coelicolor (strain ATCC BAA-471 / A3(2) / M145).